A 285-amino-acid polypeptide reads, in one-letter code: Polyamine aminopropyltransferase (285 aa).

A PABS domain is found at 5–241 (DTWFTEHFQA…GWWSVTLSSK (237 aa)). Gln35 provides a ligand contact to S-methyl-5'-thioadenosine. Residues His66 and Asp90 each coordinate spermidine. S-methyl-5'-thioadenosine contacts are provided by residues Asp110 and 141–142 (DG). Asp160 serves as the catalytic Proton acceptor. 160–163 (DSTD) is a binding site for spermidine. Pro167 is a binding site for S-methyl-5'-thioadenosine.

It belongs to the spermidine/spermine synthase family. Homodimer or homotetramer.

The protein resides in the cytoplasm. It carries out the reaction S-adenosyl 3-(methylsulfanyl)propylamine + putrescine = S-methyl-5'-thioadenosine + spermidine + H(+). The protein operates within amine and polyamine biosynthesis; spermidine biosynthesis; spermidine from putrescine: step 1/1. Catalyzes the irreversible transfer of a propylamine group from the amino donor S-adenosylmethioninamine (decarboxy-AdoMet) to putrescine (1,4-diaminobutane) to yield spermidine. This is Polyamine aminopropyltransferase from Xylella fastidiosa (strain M12).